Here is a 322-residue protein sequence, read N- to C-terminus: Lipoyl synthase (322 aa).

Positions 61, 66, 72, 87, 91, 94, and 300 each coordinate [4Fe-4S] cluster. A Radical SAM core domain is found at 73-289; the sequence is WDKKHATFMI…ETVAYTKGFL (217 aa).

Belongs to the radical SAM superfamily. Lipoyl synthase family. [4Fe-4S] cluster serves as cofactor.

The protein localises to the cytoplasm. It carries out the reaction [[Fe-S] cluster scaffold protein carrying a second [4Fe-4S](2+) cluster] + N(6)-octanoyl-L-lysyl-[protein] + 2 oxidized [2Fe-2S]-[ferredoxin] + 2 S-adenosyl-L-methionine + 4 H(+) = [[Fe-S] cluster scaffold protein] + N(6)-[(R)-dihydrolipoyl]-L-lysyl-[protein] + 4 Fe(3+) + 2 hydrogen sulfide + 2 5'-deoxyadenosine + 2 L-methionine + 2 reduced [2Fe-2S]-[ferredoxin]. It participates in protein modification; protein lipoylation via endogenous pathway; protein N(6)-(lipoyl)lysine from octanoyl-[acyl-carrier-protein]: step 2/2. Its function is as follows. Catalyzes the radical-mediated insertion of two sulfur atoms into the C-6 and C-8 positions of the octanoyl moiety bound to the lipoyl domains of lipoate-dependent enzymes, thereby converting the octanoylated domains into lipoylated derivatives. This chain is Lipoyl synthase, found in Rhizobium meliloti (strain 1021) (Ensifer meliloti).